Consider the following 206-residue polypeptide: ATP synthase subunit b (206 aa).

A helical transmembrane segment spans residues 10–30 (LLKPFVSTAAICLLVAGTVVL).

It belongs to the ATPase B chain family. As to quaternary structure, F-type ATPases have 2 components, F(1) - the catalytic core - and F(0) - the membrane proton channel. F(1) has five subunits: alpha(3), beta(3), gamma(1), delta(1), epsilon(1). F(0) has three main subunits: a(1), b(2) and c(10-14). The alpha and beta chains form an alternating ring which encloses part of the gamma chain. F(1) is attached to F(0) by a central stalk formed by the gamma and epsilon chains, while a peripheral stalk is formed by the delta and b chains.

Its subcellular location is the cell inner membrane. In terms of biological role, f(1)F(0) ATP synthase produces ATP from ADP in the presence of a proton or sodium gradient. F-type ATPases consist of two structural domains, F(1) containing the extramembraneous catalytic core and F(0) containing the membrane proton channel, linked together by a central stalk and a peripheral stalk. During catalysis, ATP synthesis in the catalytic domain of F(1) is coupled via a rotary mechanism of the central stalk subunits to proton translocation. Component of the F(0) channel, it forms part of the peripheral stalk, linking F(1) to F(0). In Geobacter sulfurreducens (strain ATCC 51573 / DSM 12127 / PCA), this protein is ATP synthase subunit b.